A 221-amino-acid chain; its full sequence is Thymidylate kinase (221 aa).

Position 10–17 (Gly-10–Thr-17) interacts with ATP.

Belongs to the thymidylate kinase family.

It carries out the reaction dTMP + ATP = dTDP + ADP. Its function is as follows. Phosphorylation of dTMP to form dTDP in both de novo and salvage pathways of dTTP synthesis. The chain is Thymidylate kinase from Desulforudis audaxviator (strain MP104C).